A 686-amino-acid polypeptide reads, in one-letter code: Translation initiation factor IF-2 (686 aa).

The segment at 54-105 is disordered; it reads KPSVADEFEVEEKVVRSKKNSNKKKKKGKGNEDKRQENFAGRQQTQTVETPD. Positions 69–81 are enriched in basic residues; sequence RSKKNSNKKKKKG. A tr-type G domain is found at 188-357; that stretch reads ERPAVVTIMG…LLISEVEEYK (170 aa). The tract at residues 197–204 is G1; that stretch reads GHVDHGKT. Residue 197 to 204 participates in GTP binding; it reads GHVDHGKT. Residues 222–226 are G2; it reads GITQH. Positions 243-246 are G3; it reads DTPG. GTP contacts are provided by residues 243–247 and 297–300; these read DTPGH and NKMD. Positions 297–300 are G4; the sequence is NKMD. The tract at residues 333 to 335 is G5; that stretch reads SAI.

The protein belongs to the TRAFAC class translation factor GTPase superfamily. Classic translation factor GTPase family. IF-2 subfamily.

Its subcellular location is the cytoplasm. Its function is as follows. One of the essential components for the initiation of protein synthesis. Protects formylmethionyl-tRNA from spontaneous hydrolysis and promotes its binding to the 30S ribosomal subunits. Also involved in the hydrolysis of GTP during the formation of the 70S ribosomal complex. This chain is Translation initiation factor IF-2, found in Bacillus anthracis (strain A0248).